The following is a 208-amino-acid chain: Uracil phosphoribosyltransferase (208 aa).

Residues arginine 78, arginine 103, and aspartate 130–serine 138 each bind 5-phospho-alpha-D-ribose 1-diphosphate. Residues isoleucine 193 and glycine 198–alanine 200 each bind uracil. Aspartate 199 provides a ligand contact to 5-phospho-alpha-D-ribose 1-diphosphate.

Belongs to the UPRTase family. It depends on Mg(2+) as a cofactor.

It catalyses the reaction UMP + diphosphate = 5-phospho-alpha-D-ribose 1-diphosphate + uracil. Its pathway is pyrimidine metabolism; UMP biosynthesis via salvage pathway; UMP from uracil: step 1/1. With respect to regulation, allosterically activated by GTP. Its function is as follows. Catalyzes the conversion of uracil and 5-phospho-alpha-D-ribose 1-diphosphate (PRPP) to UMP and diphosphate. The sequence is that of Uracil phosphoribosyltransferase from Trichlorobacter lovleyi (strain ATCC BAA-1151 / DSM 17278 / SZ) (Geobacter lovleyi).